The primary structure comprises 612 residues: Peroxisomal carnitine O-octanoyltransferase (612 aa).

M1 carries the N-acetylmethionine modification. N6-succinyllysine occurs at positions 40 and 57. The active-site Proton acceptor is H327. Residues K406 and 410–417 (KEKQLHPD) each bind CoA. K406 is subject to N6-acetyllysine; alternate. Residue K406 is modified to N6-succinyllysine; alternate. Residues Y439, T441, and T452 each contribute to the (R)-carnitine site. The Microbody targeting signal signature appears at 610–612 (PHL).

This sequence belongs to the carnitine/choline acetyltransferase family. As to quaternary structure, monomer.

It localises to the peroxisome. It catalyses the reaction octanoyl-CoA + (R)-carnitine = O-octanoyl-(R)-carnitine + CoA. The enzyme catalyses 4,8-dimethylnonanoyl-CoA + (R)-carnitine = O-4,8-dimethylnonanoyl-(R)-carnitine + CoA. The protein operates within lipid metabolism; fatty acid beta-oxidation. Functionally, beta-oxidation of fatty acids. The highest activity concerns the C6 to C10 chain length substrate. In Bos taurus (Bovine), this protein is Peroxisomal carnitine O-octanoyltransferase (CROT).